Reading from the N-terminus, the 626-residue chain is Serine/threonine-protein kinase ATG1a (626 aa).

Positions 10–268 (YALGPRIGSG…FREFFNHMFL (259 aa)) constitute a Protein kinase domain. Residues 16-24 (IGSGSFAVV) and K39 contribute to the ATP site. The Proton acceptor role is filled by D132. Polar residues predominate over residues 288–308 (KSLLPSAQPSTSTNRFKSSAE). The segment at 288 to 347 (KSLLPSAQPSTSTNRFKSSAENVHKHGSSSSASNSQISMPHTSFEKTRKDTEGQCSSNQS) is disordered. Positions 315-325 (SSSSASNSQIS) are enriched in low complexity. Basic and acidic residues predominate over residues 330–339 (SFEKTRKDTE). Positions 360 to 363 (YVLV) match the AIM (Atg8-family-interacting motif) motif.

The protein belongs to the protein kinase superfamily. Ser/Thr protein kinase family. As to quaternary structure, interacts with ATG13A. Interacts with ATG8E. Binds to ATG8E on autophagic vesicles. Phosphorylated during nutrient starvation. Dephosphorylated in nutrient-rich conditions.

It localises to the cytoplasmic vesicle. The protein resides in the autophagosome. Serine/threonine protein kinase involved in autophagy in a nutritional condition-dependent manner. The ATG1-ATG13 protein kinase complex regulates downstream events required for autophagosome enclosure and/or vacuolar delivery. Becomes a target of autophagy under nutrient starvation. Connects autophagy to plant nutritional status. The protein is Serine/threonine-protein kinase ATG1a of Arabidopsis thaliana (Mouse-ear cress).